The chain runs to 280 residues: Fructose-1,6-bisphosphatase class 1 (280 aa).

Residues Glu64, Asp83, Leu85, and Asp86 each coordinate Mg(2+). Substrate-binding positions include 86 to 89 (DGSS), Tyr189, and Lys220. Glu226 contacts Mg(2+).

The protein belongs to the FBPase class 1 family. In terms of assembly, homotetramer. Requires Mg(2+) as cofactor.

The protein resides in the cytoplasm. The enzyme catalyses beta-D-fructose 1,6-bisphosphate + H2O = beta-D-fructose 6-phosphate + phosphate. The protein operates within carbohydrate biosynthesis; gluconeogenesis. This is Fructose-1,6-bisphosphatase class 1 from Campylobacter jejuni subsp. doylei (strain ATCC BAA-1458 / RM4099 / 269.97).